An 874-amino-acid chain; its full sequence is Alanine--tRNA ligase (874 aa).

Residues His-562, His-566, Cys-664, and His-668 each coordinate Zn(2+).

The protein belongs to the class-II aminoacyl-tRNA synthetase family. Zn(2+) serves as cofactor.

Its subcellular location is the cytoplasm. The enzyme catalyses tRNA(Ala) + L-alanine + ATP = L-alanyl-tRNA(Ala) + AMP + diphosphate. Functionally, catalyzes the attachment of alanine to tRNA(Ala) in a two-step reaction: alanine is first activated by ATP to form Ala-AMP and then transferred to the acceptor end of tRNA(Ala). Also edits incorrectly charged Ser-tRNA(Ala) and Gly-tRNA(Ala) via its editing domain. The chain is Alanine--tRNA ligase from Shewanella oneidensis (strain ATCC 700550 / JCM 31522 / CIP 106686 / LMG 19005 / NCIMB 14063 / MR-1).